The following is a 338-amino-acid chain: Ketol-acid reductoisomerase (NADP(+)) (338 aa).

A KARI N-terminal Rossmann domain is found at 1 to 181; sequence MKVYYDKDAD…GGTKGGVIET (181 aa). NADP(+) is bound by residues 24–27, Arg47, and Ser52; that span reads YGSQ. Residue His107 is part of the active site. Gly133 is an NADP(+) binding site. The KARI C-terminal knotted domain occupies 182 to 327; the sequence is NFREETETDL…GQLRDMMPWI (146 aa). Mg(2+) is bound by residues Asp190, Glu194, Glu226, and Glu230. Ser251 is a binding site for substrate.

This sequence belongs to the ketol-acid reductoisomerase family. Mg(2+) serves as cofactor.

The enzyme catalyses (2R)-2,3-dihydroxy-3-methylbutanoate + NADP(+) = (2S)-2-acetolactate + NADPH + H(+). The catalysed reaction is (2R,3R)-2,3-dihydroxy-3-methylpentanoate + NADP(+) = (S)-2-ethyl-2-hydroxy-3-oxobutanoate + NADPH + H(+). It functions in the pathway amino-acid biosynthesis; L-isoleucine biosynthesis; L-isoleucine from 2-oxobutanoate: step 2/4. It participates in amino-acid biosynthesis; L-valine biosynthesis; L-valine from pyruvate: step 2/4. Involved in the biosynthesis of branched-chain amino acids (BCAA). Catalyzes an alkyl-migration followed by a ketol-acid reduction of (S)-2-acetolactate (S2AL) to yield (R)-2,3-dihydroxy-isovalerate. In the isomerase reaction, S2AL is rearranged via a Mg-dependent methyl migration to produce 3-hydroxy-3-methyl-2-ketobutyrate (HMKB). In the reductase reaction, this 2-ketoacid undergoes a metal-dependent reduction by NADPH to yield (R)-2,3-dihydroxy-isovalerate. This Dechloromonas aromatica (strain RCB) protein is Ketol-acid reductoisomerase (NADP(+)).